Here is a 57-residue protein sequence, read N- to C-terminus: Large ribosomal subunit protein bL32 (57 aa).

The protein belongs to the bacterial ribosomal protein bL32 family.

This chain is Large ribosomal subunit protein bL32, found in Streptomyces avermitilis (strain ATCC 31267 / DSM 46492 / JCM 5070 / NBRC 14893 / NCIMB 12804 / NRRL 8165 / MA-4680).